The chain runs to 179 residues: Gene 49 protein (179 aa).

2 disordered regions span residues 1 to 38 (MKGN…VTTA) and 102 to 137 (HYAG…GEKR). Positions 18–28 (QPEPAPAPEPE) are enriched in pro residues. Over residues 29 to 38 (TAPSATVTTA) the composition is skewed to low complexity. Over residues 104 to 119 (AGSGGSAPANGGGGGQ) the composition is skewed to gly residues. Residues 120–132 (QQSRAPQAAQEAP) are compositionally biased toward low complexity.

This chain is Gene 49 protein (49), found in Mycobacterium (Mycobacteriophage L5).